The chain runs to 543 residues: Ipecac alkaloid beta-glucosidase 2 (543 aa).

Residues glutamine 36, histidine 140, 185–186, tyrosine 350, glutamate 422, tryptophan 471, and phenylalanine 487 contribute to the a beta-D-glucoside site; that span reads NE. The Proton donor role is filled by glutamate 186. The Nucleophile role is filled by glutamate 422.

It belongs to the glycosyl hydrolase 1 family.

The protein resides in the cytoplasm. It is found in the cytosol. It catalyses the reaction deacetylipecoside + H2O = deacetylipecoside aglycone + D-glucose. The enzyme catalyses deacetylisoipecoside + H2O = deacetylisoipecoside aglycone + D-glucose. It functions in the pathway alkaloid biosynthesis. Functionally, beta-glucosidase catalyzing deglucosylation on N-deacetylisoipecoside and N-deacetylipecoside. In Carapichea ipecacuanha (Ipecac), this protein is Ipecac alkaloid beta-glucosidase 2.